The sequence spans 230 residues: UPF0173 metal-dependent hydrolase RSKD131_0588 (230 aa).

This sequence belongs to the UPF0173 family.

This chain is UPF0173 metal-dependent hydrolase RSKD131_0588, found in Cereibacter sphaeroides (strain KD131 / KCTC 12085) (Rhodobacter sphaeroides).